The chain runs to 339 residues: Biotin synthase (339 aa).

The Radical SAM core domain occupies 53 to 271 (NAIQMSRLLS…IALARILMPR (219 aa)). 3 residues coordinate [4Fe-4S] cluster: Cys68, Cys72, and Cys75. [2Fe-2S] cluster is bound by residues Cys112, Cys143, Cys203, and Arg275.

It belongs to the radical SAM superfamily. Biotin synthase family. In terms of assembly, homodimer. Requires [4Fe-4S] cluster as cofactor. [2Fe-2S] cluster serves as cofactor.

The enzyme catalyses (4R,5S)-dethiobiotin + (sulfur carrier)-SH + 2 reduced [2Fe-2S]-[ferredoxin] + 2 S-adenosyl-L-methionine = (sulfur carrier)-H + biotin + 2 5'-deoxyadenosine + 2 L-methionine + 2 oxidized [2Fe-2S]-[ferredoxin]. It participates in cofactor biosynthesis; biotin biosynthesis; biotin from 7,8-diaminononanoate: step 2/2. Its function is as follows. Catalyzes the conversion of dethiobiotin (DTB) to biotin by the insertion of a sulfur atom into dethiobiotin via a radical-based mechanism. The polypeptide is Biotin synthase (Agrobacterium fabrum (strain C58 / ATCC 33970) (Agrobacterium tumefaciens (strain C58))).